Consider the following 273-residue polypeptide: Mitochondrial distribution and morphology protein 12 (273 aa).

One can recognise an SMP-LTD domain in the interval 1–260 (MSFDINWEQL…WPSWINFDFY (260 aa)). The disordered stretch occupies residues 76–98 (MSAEEETEGSDDEGYGGDRVRNR). Over residues 78 to 90 (AEEETEGSDDEGY) the composition is skewed to acidic residues.

Belongs to the MDM12 family. Component of the ER-mitochondria encounter structure (ERMES) or MDM complex, composed of MMM1, MDM10, MDM12 and MDM34. An MMM1 homodimer associates with one molecule of MDM12 on each side in a pairwise head-to-tail manner, and the SMP-LTD domains of MMM1 and MDM12 generate a continuous hydrophobic tunnel for phospholipid trafficking.

The protein localises to the mitochondrion outer membrane. Its subcellular location is the endoplasmic reticulum membrane. Functionally, component of the ERMES/MDM complex, which serves as a molecular tether to connect the endoplasmic reticulum (ER) and mitochondria. Components of this complex are involved in the control of mitochondrial shape and protein biogenesis, and function in nonvesicular lipid trafficking between the ER and mitochondria. MDM12 is required for the interaction of the ER-resident membrane protein MMM1 and the outer mitochondrial membrane-resident beta-barrel protein MDM10. The MDM12-MMM1 subcomplex functions in the major beta-barrel assembly pathway that is responsible for biogenesis of all mitochondrial outer membrane beta-barrel proteins, and acts in a late step after the SAM complex. The MDM10-MDM12-MMM1 subcomplex further acts in the TOM40-specific pathway after the action of the MDM12-MMM1 complex. Essential for establishing and maintaining the structure of mitochondria and maintenance of mtDNA nucleoids. The polypeptide is Mitochondrial distribution and morphology protein 12 (Vanderwaltozyma polyspora (strain ATCC 22028 / DSM 70294 / BCRC 21397 / CBS 2163 / NBRC 10782 / NRRL Y-8283 / UCD 57-17) (Kluyveromyces polysporus)).